A 162-amino-acid polypeptide reads, in one-letter code: Selenoprotein F (162 aa).

The N-terminal stretch at 1 to 28 is a signal peptide; the sequence is MAAEPGGWLGPALGLRLLLATALQMVSA. A non-standard amino acid (selenocysteine) is located at residue Sec93.

The protein belongs to the selenoprotein M/F family. As to quaternary structure, forms a tight complex with UGGT1/UGCGL1. Interacts with UGGT2/UGCGL2. Interacts with RDH11.

It is found in the endoplasmic reticulum lumen. Its function is as follows. May be involved in redox reactions associated with the formation of disulfide bonds. May contribute to the quality control of protein folding in the endoplasmic reticulum. May regulate protein folding by enhancing the catalytic activity of UGGT1/UGCGL1 and UGGT2/UGCGL2. The sequence is that of Selenoprotein F from Sus scrofa (Pig).